We begin with the raw amino-acid sequence, 155 residues long: UPF0303 protein lp_3613 (155 aa).

Belongs to the UPF0303 family.

The polypeptide is UPF0303 protein lp_3613 (Lactiplantibacillus plantarum (strain ATCC BAA-793 / NCIMB 8826 / WCFS1) (Lactobacillus plantarum)).